Here is a 309-residue protein sequence, read N- to C-terminus: Ribonuclease Z (309 aa).

Positions 63, 65, 67, 68, 141, 208, and 266 each coordinate Zn(2+). The active-site Proton acceptor is Asp67.

This sequence belongs to the RNase Z family. In terms of assembly, homodimer. The cofactor is Zn(2+).

The catalysed reaction is Endonucleolytic cleavage of RNA, removing extra 3' nucleotides from tRNA precursor, generating 3' termini of tRNAs. A 3'-hydroxy group is left at the tRNA terminus and a 5'-phosphoryl group is left at the trailer molecule.. Functionally, zinc phosphodiesterase, which displays some tRNA 3'-processing endonuclease activity. Probably involved in tRNA maturation, by removing a 3'-trailer from precursor tRNA. The polypeptide is Ribonuclease Z (Salinispora arenicola (strain CNS-205)).